The chain runs to 372 residues: Envelope phospholipase OPG057 (372 aa).

The YPPL signature appears at 153 to 156 (YPPL). S-palmitoyl cysteine; by host attachment occurs at residues cysteine 185 and cysteine 186. One can recognise a PLD phosphodiesterase domain in the interval 307 to 334 (FTIQNNTKLLIVDDEYVHITSANFDGTH).

Belongs to the orthopoxvirus OPG057 family. In terms of assembly, interacts with protein OPG190/B5. In terms of processing, palmitoylated. Attachment of the palmitate moiety is essential for correct intracellular targeting and protein function.

The protein localises to the virion membrane. It is found in the host Golgi apparatus. It localises to the host trans-Golgi network. Its subcellular location is the host endoplasmic reticulum membrane. The enzyme catalyses a 1,2-diacyl-sn-glycero-3-phosphocholine + H2O = a 1,2-diacyl-sn-glycero-3-phosphate + choline + H(+). Functionally, major envelope protein that plays a role in the biogenesis of the viral double membrane and in egress of virus from the host cell. Produces the wrapped form of virus that is required for cell-to-cell spread. Acts as a lipase with broad specificity including phospholipase C, phospholipase A, and triacylglycerol lipase activities. The sequence is that of Envelope phospholipase OPG057 (OPG057) from Vaccinia virus (strain Western Reserve) (VACV).